The following is a 130-amino-acid chain: Large ribosomal subunit protein bL20c (130 aa).

It belongs to the bacterial ribosomal protein bL20 family.

The protein resides in the plastid. The protein localises to the chloroplast. Functionally, binds directly to 23S ribosomal RNA and is necessary for the in vitro assembly process of the 50S ribosomal subunit. It is not involved in the protein synthesizing functions of that subunit. This chain is Large ribosomal subunit protein bL20c, found in Oenothera argillicola (Appalachian evening primrose).